Consider the following 326-residue polypeptide: Tagatose 1,6-diphosphate aldolase (326 aa).

It belongs to the aldolase LacD family.

It catalyses the reaction D-tagatofuranose 1,6-bisphosphate = D-glyceraldehyde 3-phosphate + dihydroxyacetone phosphate. It participates in carbohydrate metabolism; D-tagatose 6-phosphate degradation; D-glyceraldehyde 3-phosphate and glycerone phosphate from D-tagatose 6-phosphate: step 2/2. The protein is Tagatose 1,6-diphosphate aldolase of Streptococcus pneumoniae serotype 4 (strain ATCC BAA-334 / TIGR4).